A 121-amino-acid chain; its full sequence is Large ribosomal subunit protein uL14 (121 aa).

The protein belongs to the universal ribosomal protein uL14 family. As to quaternary structure, part of the 50S ribosomal subunit. Forms a cluster with proteins L3 and L19. In the 70S ribosome, L14 and L19 interact and together make contacts with the 16S rRNA in bridges B5 and B8.

Its function is as follows. Binds to 23S rRNA. Forms part of two intersubunit bridges in the 70S ribosome. The chain is Large ribosomal subunit protein uL14 from Prochlorococcus marinus (strain MIT 9313).